A 161-amino-acid chain; its full sequence is V-type proton ATPase 16 kDa proteolipid subunit c 2 (161 aa).

The Lumenal segment spans residues 1 to 15 (MSYDLETAERAAYAP). The chain crosses the membrane as a helical span at residues 16–36 (FFGYMGAASAQIFTVLGAAYG). Residues 37-58 (TAKSAVGICSMGVMRPELIMKS) are Cytoplasmic-facing. Residues 59–79 (VIPVIMAGIIGIYGLVVAMVL) traverse the membrane as a helical segment. Residues 80–98 (KGKVTSASAGYDLNKGFAH) lie on the Lumenal side of the membrane. Residues 99–119 (LAAGLTCGLCGLGAGYAIGIV) form a helical membrane-spanning segment. The Cytoplasmic portion of the chain corresponds to 120–137 (GDAGVRGTAQQPRLFVGM). A helical membrane pass occupies residues 138 to 158 (ILILIFSEVLGLYGMIVALIL). The Lumenal segment spans residues 159-161 (GTS).

It belongs to the V-ATPase proteolipid subunit family. In terms of assembly, V-ATPase is a heteromultimeric enzyme made up of two complexes: the ATP-hydrolytic V1 complex and the proton translocation V0 complex. The V1 complex consists of three catalytic AB heterodimers that form a heterohexamer, three peripheral stalks each consisting of EG heterodimers, one central rotor including subunits D and F, and the regulatory subunits C and H. The proton translocation complex V0 consists of the proton transport subunit a, a ring of proteolipid subunits c9c'', rotary subunit d, subunits e and f, and the accessory subunits vah-19/Ac45 and vah-20/PRR. As to expression, expressed in the H-shaped excretory cell, rectum, and a pair of cells posterior to the anus.

It localises to the membrane. Functionally, proton-conducting pore forming subunit of the V0 complex of vacuolar(H+)-ATPase (V-ATPase), a multisubunit enzyme composed of a peripheral complex (V1) that hydrolyzes ATP and a membrane integral complex (V0) that translocates protons. V-ATPase is responsible for acidifying and maintaining the pH of intracellular compartments and in some cell types, is targeted to the plasma membrane, where it is responsible for acidifying the extracellular environment. Involved in necrotic cell death. Required along with other vacuolar ATPase components for the removal of protein aggregates which form in immature oocytes in the distal gonad. This removal occurs as the oocytes mature and move to the proximal gonad, is triggered by the introduction of sperm through mating and occurs before fertilization. The introduction of sperm triggers V-ATPase accumulation in proximal oocytes and induces lysosomal acidification which leads to engulfing of protein aggregates by lysosomes and subsequent clearance of the aggregates. Lysosomal acidification also leads to changes in mitochondrial morphology and function. Mitochondria in distal immature oocytes are fragmented, produce high levels of reactive oxygen species (ROS) and have high membrane potential, indicative of metabolic inactivity. In contrast, mitochondria in proximal mature oocytes are tubular with lower ROS levels and membrane potential, indicative of an active metabolic state required for aggregate mobilization before clearance. The sequence is that of V-type proton ATPase 16 kDa proteolipid subunit c 2 from Caenorhabditis elegans.